The sequence spans 364 residues: Histidinol-phosphate aminotransferase (364 aa).

An N6-(pyridoxal phosphate)lysine modification is found at lysine 226.

The protein belongs to the class-II pyridoxal-phosphate-dependent aminotransferase family. Histidinol-phosphate aminotransferase subfamily. In terms of assembly, homodimer. Pyridoxal 5'-phosphate is required as a cofactor.

The catalysed reaction is L-histidinol phosphate + 2-oxoglutarate = 3-(imidazol-4-yl)-2-oxopropyl phosphate + L-glutamate. Its pathway is amino-acid biosynthesis; L-histidine biosynthesis; L-histidine from 5-phospho-alpha-D-ribose 1-diphosphate: step 7/9. This is Histidinol-phosphate aminotransferase from Sulfurimonas denitrificans (strain ATCC 33889 / DSM 1251) (Thiomicrospira denitrificans (strain ATCC 33889 / DSM 1251)).